Reading from the N-terminus, the 334-residue chain is Glucokinase-like protein PD_0680 (334 aa).

Position 18–23 (18–23 (ADVGGT)) interacts with ATP.

The protein belongs to the bacterial glucokinase family.

This is Glucokinase-like protein PD_0680 from Xylella fastidiosa (strain Temecula1 / ATCC 700964).